Consider the following 444-residue polypeptide: Sperm-associated antigen 4 protein (444 aa).

The tract at residues 1–109 (MRRNPRPGSA…GGASEPSGSP (109 aa)) is disordered. The span at 19-36 (NFYSENSNSSHSATSGDS) shows a compositional bias: low complexity. 2 helical membrane-spanning segments follow: residues 137 to 159 (FLSLFFQVLSVFLSLVADGLVCV) and 166 to 188 (IRFLFTAVSLLSIFLAALWWGLL). The stretch at 204-241 (LSQYHHRVHSQGQQLQQLQAELSKLHKEVTSVRAAHSE) forms a coiled coil. The SUN domain maps to 267–428 (GASIDLEKTS…YRVRAHGVRI (162 aa)).

Self-associates. Interacts with ODF1. May associate with microtubules. Interacts with SUN3 and SYNE1; suggesting the formation of a LINC complexs; a SUN domain-based heterotrimer of SPAG4 and SUN3 may associate with SYNE1. Interacts with SEPT12 and LMNB1; during spermatogenesis. In terms of tissue distribution, testis specific. Exclusively expressed in spermatids.

It localises to the membrane. It is found in the cytoplasm. The protein resides in the cytoskeleton. The protein localises to the flagellum axoneme. Its subcellular location is the nucleus envelope. It localises to the nucleus inner membrane. In terms of biological role, involved in spermatogenesis. Required for sperm head formation but not required to establish and maintain general polarity of the sperm head. Required for anchoring and organization of the manchette. Required for targeting of SUN3 and probably SYNE1 through a probable SUN1:SYNE3 LINC complex to the nuclear envelope and involved in accurate posterior sperm head localization of the complex. May anchor SUN3 the nuclear envelope. Involved in maintenance of the nuclear envelope integrity. May assist the organization and assembly of outer dense fibers (ODFs), a specific structure of the sperm tail. This is Sperm-associated antigen 4 protein (Spag4) from Rattus norvegicus (Rat).